The primary structure comprises 327 residues: Probable cell division protein WhiA (327 aa).

Residues 275 to 308 (SLEELGRLADPQMTKDAVAGRIRRLLTTADKRAR) constitute a DNA-binding region (H-T-H motif).

Belongs to the WhiA family.

Involved in cell division and chromosome segregation. This chain is Probable cell division protein WhiA, found in Corynebacterium efficiens (strain DSM 44549 / YS-314 / AJ 12310 / JCM 11189 / NBRC 100395).